The sequence spans 541 residues: Phosphoenolpyruvate carboxykinase (ATP) (541 aa).

243-250 (GLSGTGKT) is a binding site for ATP.

The protein belongs to the phosphoenolpyruvate carboxykinase (ATP) family.

The catalysed reaction is oxaloacetate + ATP = phosphoenolpyruvate + ADP + CO2. It participates in carbohydrate biosynthesis; gluconeogenesis. The chain is Phosphoenolpyruvate carboxykinase (ATP) (PCK1) from Eremothecium gossypii (strain ATCC 10895 / CBS 109.51 / FGSC 9923 / NRRL Y-1056) (Yeast).